The sequence spans 76 residues: Dermaseptin-B4 (76 aa).

The first 22 residues, 1–22 (MAFLKKSLFLVLFLGLVSLSIC), serve as a signal peptide directing secretion. The propeptide occupies 23–43 (EEEKRENKDEIEQEDDEQSEE). Gln73 carries the glutamine amide modification. The propeptide occupies 75–76 (EQ).

Belongs to the frog skin active peptide (FSAP) family. Dermaseptin subfamily. Expressed by the skin glands.

Its subcellular location is the secreted. Functionally, potent antimicrobial peptide with potent activity against Gram-positive and Gram-negative bacteria. Probably acts by disturbing membrane functions with its amphipathic structure. Has an activity of stimulation of insulin release, which may protect the species from being eaten by predators by causing fatal hypoglycemia. Has hemolytic activity. In Phyllomedusa bicolor (Two-colored leaf frog), this protein is Dermaseptin-B4.